The sequence spans 374 residues: MALRTVLVSDVPSLPDSVYGLSEGLELSKPTSFRLPGFSVIGHRGIGMNVLQSSDRRARGVKENSILSFNSAAKYPIDFIEFDVQVTKDDCPVIFHDDFIYSEENGIVNESRVTDLSLSEFLLYGPQKETEKIGKTLMRKSKEGKVLKWDVDLDDSLCTLQEAFEQVEQTLGFNIELKFDDQTVYEREFLVHILRSVLQVVSNYAKDRPVIFSSFQPDAAKLVRELQSTYPVFFLTDAGNEIHNDERRNSLEEAIQVCLEGGLQGIVSEVKGVFRNPAAISKIKESNLSLLTYGKLNNVGEAVYMQYVMGIDGVIVDFVEEIIESTTRMMIRPPPSSSPLPSPSKDDDVAITRPEFSQKEISFLLKLLSQLIQH.

A GP-PDE domain is found at 38–326 (FSVIGHRGIG…DFVEEIIEST (289 aa)). Residues 330-349 (MIRPPPSSSPLPSPSKDDDV) form a disordered region. Residues 332-342 (RPPPSSSPLPS) are compositionally biased toward pro residues.

This sequence belongs to the glycerophosphoryl diester phosphodiesterase family. As to expression, expressed in roots, shoots, flowers and siliques.

It carries out the reaction a sn-glycero-3-phosphodiester + H2O = an alcohol + sn-glycerol 3-phosphate + H(+). In Arabidopsis thaliana (Mouse-ear cress), this protein is Glycerophosphodiester phosphodiesterase GDPD2.